We begin with the raw amino-acid sequence, 176 residues long: NAD(P)H-quinone oxidoreductase subunit 6, chloroplastic (176 aa).

5 helical membrane-spanning segments follow: residues 10-30 (ILLVFLGLGLILGGLGVVLLT), 32-52 (PIYSAFSLGLVLVCISLFHIP), 61-81 (AQLLIYVGAVNVLIVFAVMFM), 107-127 (ILFSLITTIWNTSWYGIIWTT), and 152-172 (FYLPFELISIILLAALIGAIA).

This sequence belongs to the complex I subunit 6 family. As to quaternary structure, NDH is composed of at least 16 different subunits, 5 of which are encoded in the nucleus.

The protein resides in the plastid. It localises to the chloroplast thylakoid membrane. It catalyses the reaction a plastoquinone + NADH + (n+1) H(+)(in) = a plastoquinol + NAD(+) + n H(+)(out). The catalysed reaction is a plastoquinone + NADPH + (n+1) H(+)(in) = a plastoquinol + NADP(+) + n H(+)(out). In terms of biological role, NDH shuttles electrons from NAD(P)H:plastoquinone, via FMN and iron-sulfur (Fe-S) centers, to quinones in the photosynthetic chain and possibly in a chloroplast respiratory chain. The immediate electron acceptor for the enzyme in this species is believed to be plastoquinone. Couples the redox reaction to proton translocation, and thus conserves the redox energy in a proton gradient. The polypeptide is NAD(P)H-quinone oxidoreductase subunit 6, chloroplastic (ndhG) (Calycanthus floridus var. glaucus (Eastern sweetshrub)).